The primary structure comprises 648 residues: Leucine-rich repeat transmembrane protein FLRT3 (648 aa).

The signal sequence occupies residues 1–28 (MSTETWNLFVAWAQLLLLFRISPQYVNA). Residues 29–527 (KPCPSVCRCD…KEPYKNSSLP (499 aa)) are Extracellular-facing. An LRRNT domain is found at 30 to 62 (PCPSVCRCDGGFIYCNDRDLTSIPSGIPDDATT). 2 disulfides stabilise this stretch: cysteine 31/cysteine 37 and cysteine 35/cysteine 44. LRR repeat units follow at residues 58–82 (DDAT…LRGL), 83–105 (DKVE…LPKN), 107–126 (KELH…ALSQ), 127–152 (IPSI…AFRD), 154–179 (IFLR…TIEE), 181–197 (RLDD…SLQD), 198–223 (LTNL…VFMN), 225–246 (INLT…NLPG), 247–269 (TNLR…AFAD), and 270–293 (LTQL…IFDD). N-linked (GlcNAc...) asparagine glycosylation is present at asparagine 226. The LRRCT domain maps to 305–356 (NPWYCGCKMKWVRDWLQSLPSKVNVRGLMCQAPERVRGMTIKDLNKELFDCK). Cysteine 309 and cysteine 334 are disulfide-bonded. Residues 409 to 503 (KIITIQVKSI…VCIETETAPL (95 aa)) form the Fibronectin type-III domain. The chain crosses the membrane as a helical span at residues 528 to 548 (LAAIIGGAVALVAITLLALVC). Residues 549–648 (WYVHRNGSLF…GIPDSDHSHS (100 aa)) are Cytoplasmic-facing. Residues 624-633 (NSHSESSSNR) show a composition bias toward low complexity. Positions 624–648 (NSHSESSSNRSYRDSGIPDSDHSHS) are disordered.

Interacts with fgfr1 and fgfr4. Interacts with rnd1, cdh1 and pcdh8. Interacts (via extracellular domain) with unc5b and unc5d (via extracellular domain). N-glycosylated. Post-translationally, proteolytic cleavage in the juxtamembrane region gives rise to a soluble ectodomain. Cleavage is probably effected by a metalloprotease.

Its subcellular location is the cell membrane. It is found in the endoplasmic reticulum membrane. The protein localises to the cell junction. It localises to the focal adhesion. The protein resides in the secreted. Its subcellular location is the cell projection. It is found in the axon. The protein localises to the growth cone membrane. Its function is as follows. Functions in cell-cell adhesion, cell migration and axon guidance, exerting an attractive or repulsive role depending on its interaction partners. Modulates cadherin-dependent cell-cell adhesion and cell sorting. Plays a role in the spatial organization of brain neurons. Plays a role in vascular development. Plays a role in cell-cell adhesion via its interaction with latrophilins that are expressed at the surface of adjacent cells. Mediates axon attraction towards cells expressing ntn1. mediates axon growth cone collapse and plays a repulsive role in neuron guidance via its interaction with unc-5 family members. Plays a role in the regulation of the density of glutamaergic synapses. Plays a role in signaling cascades downstream of fgfr1, and possibly also other fgfr family members. Plays a role in embryonic morphogenesis, but not in embryonic patterning. The sequence is that of Leucine-rich repeat transmembrane protein FLRT3 from Xenopus tropicalis (Western clawed frog).